The following is a 394-amino-acid chain: MVMFKKIKSFEVVFNDPEKVYGSGEKVAGRVTVEVCEVTRVKAVRILACGVAKVLWMQGSQQCKQTLDYLRYEDTLLLEDQPTGENEMVIMRPGNKYEYKFGFELPQGPLGTSFKGKYGCVDYWVKAFLDRPSQPTQEAKKNFEVMDLVDVNTPDLMAPVSAKKEKKVSCMFIPDGRVSVSARIDRKGFCEGDDISIHADFENTCSRIVVPKAAIVARHTYLANGQTKVLTQKLSSVRGNHIISGTCASWRGKSLRVQKIRPSILGCNILRVEYSLLIYVSVPGSKKVILDLPLVIGSRSGLSSRTSSMASRTSSEMSWIDLNIPDTPEAPPCYMDVIPEDHRLESPTTPLLDDVDDSQDSPIFMYAPEFQFMPPPTYTEVDPCVLNNNNNNVQ.

A Glycyl lysine isopeptide (Lys-Gly) (interchain with G-Cter in ubiquitin) cross-link involves residue K212. A Phosphoserine modification is found at S361.

This sequence belongs to the arrestin family. Homodimer; disulfide-linked. Interacts with TXN/thioredoxin through its redox-active site. Interacts with transcriptional repressors ZBTB16, ZBTB32 and HDAC1. Interacts with DDIT4. Ubiquitinated; undergoes heterotypic 'Lys-48'-/'Lys-63'-branched polyubiquitination catalyzed by ITCH and UBR5 resulting in proteasomal degradation. Deubiquitinated by USP5, leading to TXNIP stabilization.

The protein resides in the cytoplasm. Its function is as follows. May act as an oxidative stress mediator by inhibiting thioredoxin activity or by limiting its bioavailability. Interacts with COPS5 and restores COPS5-induced suppression of CDKN1B stability, blocking the COPS5-mediated translocation of CDKN1B from the nucleus to the cytoplasm. Functions as a transcriptional repressor, possibly by acting as a bridge molecule between transcription factors and corepressor complexes, and over-expression will induce G0/G1 cell cycle arrest. Required for the maturation of natural killer cells. Acts as a suppressor of tumor cell growth. Inhibits the proteasomal degradation of DDIT4, and thereby contributes to the inhibition of the mammalian target of rapamycin complex 1 (mTORC1). The chain is Thioredoxin-interacting protein (Txnip) from Rattus norvegicus (Rat).